A 271-amino-acid chain; its full sequence is MPRRTAFFISDRTGITVESMGDALLNQFEVNLKRENHPFIDSPEKAHQLVNIINATAEKSALRPLVFSSIVDEEIRNIVKSSAGLHLSFFDAFLGTLEKELGVSALQFSPRINSIINTERYDARMESLNFTLNHDDGSSDRNLQHAEVILIGVSRSGKTPTCLYLALQYGIRAANYPLTPEDLQSPNLPNMVKPFRNKLFGLTIDPERLSKIRQERRPNSEYADILTCKREVSDAKAMFYRFNLPYANTTHKSVEELAVHIMQTCHLKRRY.

152–159 provides a ligand contact to ADP; it reads GVSRSGKT.

This sequence belongs to the pyruvate, phosphate/water dikinase regulatory protein family. PSRP subfamily.

The enzyme catalyses [pyruvate, water dikinase] + ADP = [pyruvate, water dikinase]-phosphate + AMP + H(+). It carries out the reaction [pyruvate, water dikinase]-phosphate + phosphate + H(+) = [pyruvate, water dikinase] + diphosphate. Its function is as follows. Bifunctional serine/threonine kinase and phosphorylase involved in the regulation of the phosphoenolpyruvate synthase (PEPS) by catalyzing its phosphorylation/dephosphorylation. This is Putative phosphoenolpyruvate synthase regulatory protein from Dichelobacter nodosus (strain VCS1703A).